Here is a 164-residue protein sequence, read N- to C-terminus: Thiol peroxidase (164 aa).

Positions 18-163 (INEGDFAPDF…FDAALAAYKN (146 aa)) constitute a Thioredoxin domain. The active-site Cysteine sulfenic acid (-SOH) intermediate is the C60. A disulfide bridge links C60 with C93.

This sequence belongs to the peroxiredoxin family. Tpx subfamily. Homodimer.

The enzyme catalyses a hydroperoxide + [thioredoxin]-dithiol = an alcohol + [thioredoxin]-disulfide + H2O. Its function is as follows. Thiol-specific peroxidase that catalyzes the reduction of hydrogen peroxide and organic hydroperoxides to water and alcohols, respectively. Plays a role in cell protection against oxidative stress by detoxifying peroxides. This chain is Thiol peroxidase, found in Staphylococcus aureus (strain COL).